The primary structure comprises 980 residues: LRR receptor-like serine/threonine-protein kinase SIK1 (980 aa).

Residues 1 to 24 form the signal peptide; that stretch reads MAAARAPWLWWWVVVVVGVAVAEA. Over 25-588 the chain is Extracellular; the sequence is ASGGGGGGDG…HGQRVNISKT (564 aa). N72 and N81 each carry an N-linked (GlcNAc...) asparagine glycan. 20 LRR repeats span residues 75–98, 99–122, 124–146, 147–170, 171–194, 196–218, 219–242, 243–265, 266–289, 290–312, 314–337, 338–361, 362–385, 387–408, 409–433, 435–457, 458–480, 481–505, 507–529, and 531–554; these read FAVLALNLSNLNLGGEISPAIGEL, KNLQFVDLKGNKLTGQIPDEIGDC, SLKYLDLSGNLLYGDIPFSISKL, KQLEELILKNNQLTGPIPSTLSQI, PNLKTLDLAQNQLTGDIPRLIYWN, VLQYLGLRGNSLTGTLSPDMCQL, TGLWYFDVRGNNLTGTIPESIGNC, TSFEILDISYNQISGEIPYNIGF, LQVATLSLQGNRLTGKIPDVIGLM, QALAVLDLSENELVGPIPSILGN, SYTGKLYLHGNKLTGVIPPELGNM, SKLSYLQLNDNELVGTIPAELGKL, EELFELNLANNNLQGPIPANISSC, ALNKFNVYGNKLNGSIPAGFQK, LESLTYLNLSSNNFKGNIPSELGHI, NLDTLDLSYNEFSGPVPATIGDL, EHLLELNLSKNHLDGPVPAEFGN, LRSVQVIDMSNNNLSGSLPEELGQL, NLDSLILNNNNLVGEIPAQLANC, and SLNNLNLSYNNLSGHVPMAKNFSK. Residues N230 and N241 are each glycosylated (N-linked (GlcNAc...) asparagine). Residues N312 and N336 are each glycosylated (N-linked (GlcNAc...) asparagine). N381, N399, and N416 each carry an N-linked (GlcNAc...) asparagine glycan. N464 and N493 each carry an N-linked (GlcNAc...) asparagine glycan. N536, N541, N551, and N584 each carry an N-linked (GlcNAc...) asparagine glycan. The chain crosses the membrane as a helical span at residues 589–609; sequence AIACIILGFIILLCVLLLAIY. The Cytoplasmic portion of the chain corresponds to 610–980; it reads KTNQPQPLVK…FGEVISKHTM (371 aa). Residues 653-923 enclose the Protein kinase domain; it reads LSEKYIIGYG…EVARVLLSLL (271 aa). ATP contacts are provided by residues 659–667 and K681; that span reads IGYGASSTV. The active-site Proton acceptor is D778.

It belongs to the protein kinase superfamily. Ser/Thr protein kinase family. Post-translationally, autophosphorylated. Expressed in nodes, vascular bundles of stems, and anthers.

The protein localises to the cell membrane. It carries out the reaction L-seryl-[protein] + ATP = O-phospho-L-seryl-[protein] + ADP + H(+). The catalysed reaction is L-threonyl-[protein] + ATP = O-phospho-L-threonyl-[protein] + ADP + H(+). In terms of biological role, receptor kinase involved in salt drought stress responses. Acts as a positive regulator of salt and drought tolerance. May promote salt and drought tolerance through the induction of the activities of antioxidative enzymes, such as peroxidase, superoxide dismutase and catalase. May be involved in the control of stomatal development in leaf epidermis. Possesses kinase activity in vitro. Does not seem to be involved in heat tolerance. The polypeptide is LRR receptor-like serine/threonine-protein kinase SIK1 (Oryza sativa subsp. japonica (Rice)).